We begin with the raw amino-acid sequence, 545 residues long: CTP synthase (545 aa).

The tract at residues 1–266 is amidoligase domain; that stretch reads MTTRYIFVTG…DELVIKRFNI (266 aa). Ser14 serves as a coordination point for CTP. Ser14 is a binding site for UTP. Residues 15–20 and Asp72 contribute to the ATP site; that span reads SLGKGI. 2 residues coordinate Mg(2+): Asp72 and Glu140. Residues 147–149, 187–192, and Lys223 contribute to the CTP site; these read DIE and KTKPTQ. UTP-binding positions include 187–192 and Lys223; that span reads KTKPTQ. 239-241 is a binding site for ATP; sequence KDV. The Glutamine amidotransferase type-1 domain occupies 291–542; the sequence is TIGMVGKYIE…IAASLSHQKR (252 aa). Residue Gly352 participates in L-glutamine binding. The active-site Nucleophile; for glutamine hydrolysis is Cys379. L-glutamine-binding positions include 380–383, Glu403, and Arg470; that span reads LGMQ. Catalysis depends on residues His515 and Glu517.

The protein belongs to the CTP synthase family. As to quaternary structure, homotetramer.

It carries out the reaction UTP + L-glutamine + ATP + H2O = CTP + L-glutamate + ADP + phosphate + 2 H(+). The enzyme catalyses L-glutamine + H2O = L-glutamate + NH4(+). It catalyses the reaction UTP + NH4(+) + ATP = CTP + ADP + phosphate + 2 H(+). The protein operates within pyrimidine metabolism; CTP biosynthesis via de novo pathway; CTP from UDP: step 2/2. Its activity is regulated as follows. Allosterically activated by GTP, when glutamine is the substrate; GTP has no effect on the reaction when ammonia is the substrate. The allosteric effector GTP functions by stabilizing the protein conformation that binds the tetrahedral intermediate(s) formed during glutamine hydrolysis. Inhibited by the product CTP, via allosteric rather than competitive inhibition. Functionally, catalyzes the ATP-dependent amination of UTP to CTP with either L-glutamine or ammonia as the source of nitrogen. Regulates intracellular CTP levels through interactions with the four ribonucleotide triphosphates. This is CTP synthase from Shewanella denitrificans (strain OS217 / ATCC BAA-1090 / DSM 15013).